Here is a 423-residue protein sequence, read N- to C-terminus: CinA-like protein (423 aa).

The protein belongs to the CinA family.

The chain is CinA-like protein from Chlorobium phaeobacteroides (strain DSM 266 / SMG 266 / 2430).